We begin with the raw amino-acid sequence, 972 residues long: MDTDLYDEFGNYIGPELDSDEDDDELGRETKDLDEMDDDDDDDDVGDHDDDHPGMEVVLHEDKKYYPTAEEVYGPEVETIVQEEDTQPLTEPIIKPVKTKKFTLMEQTLPVTVYEMDFLADLMDNSELIRNVTLCGHLHHGKTCFVDCLIEQTHPEIRKRYDQDLCYTDILFTEQERGVGIKSTPVTVVLPDTKGKSYLFNIMDTPGHVNFSDEVTAGLRISDGVVLFIDAAEGVMLNTERLIKHAVQERLAVTVCINKIDRLILELKLPPTDAYYKLRHIVDEVNGLISMYSTDENLILSPLLGNVCFSSSQYSICFTLGSFAKIYADTFGDINYQEFAKRLWGDIYFNPKTRKFTKKAPTSSSQRSFVEFILEPLYKILAQVVGDVDTSLPRTLDELGIHLTKEELKLNIRPLLRLVCKKFFGEFTGFVDMCVQHIPSPKVGAKPKIEHTYTGGVDSDLGEAMSDCDPDGPLMCHTTKMYSTDDGVQFHAFGRVLSGTIHAGQPVKVLGENYTLEDEEDSQICTVGRLWISVARYHIEVNRVPAGNWVLIEGVDQPIVKTATITEPRGNEEAQIFRPLKFNTTSVIKIAVEPVNPSELPKMLDGLRKVNKSYPSLTTKVEESGEHVILGTGELYLDCVMHDLRKMYSEIDIKVADPVVTFCETVVETSSLKCFAETPNKKNKITMIAEPLEKGLAEDIENEVVQITWNRKKLGEFFQTKYDWDLLAARSIWAFGPDATGPNILVDDTLPSEVDKALLGSVKDSIVQGFQWGTREGPLCDELIRNVKFKILDAVVAQEPLHRGGGQIIPTARRVVYSAFLMATPRLMEPYYFVEVQAPADCVSAVYTVLARRRGHVTQDAPIPGSPLYTIKAFIPAIDSFGFETDLRTHTQGQAFSLSVFHHWQIVPGDPLDKSIVIRPLEPQPAPHLAREFMIKTRRRKGLSEDVSISKFFDDPMLLELAKQDVVLNYPM.

An N-acetylmethionine modification is found at Met1. Positions 1 to 54 (MDTDLYDEFGNYIGPELDSDEDDDELGRETKDLDEMDDDDDDDDVGDHDDDHPG) are disordered. Acidic residues-rich tracts occupy residues 17–26 (LDSDEDDDEL) and 34–48 (DEMDDDDDDDDVGDH). Position 19 is a phosphoserine (Ser19). Residue Lys64 forms a Glycyl lysine isopeptide (Lys-Gly) (interchain with G-Cter in SUMO1); alternate linkage. Residue Lys64 forms a Glycyl lysine isopeptide (Lys-Gly) (interchain with G-Cter in SUMO2); alternate linkage. At Thr86 the chain carries Phosphothreonine. The 283-residue stretch at 127–409 (ELIRNVTLCG…GIHLTKEELK (283 aa)) folds into the tr-type G domain. Residues 136–143 (GHLHHGKT), 204–208 (DTPGH), and 258–261 (NKID) each bind GTP.

Belongs to the TRAFAC class translation factor GTPase superfamily. Classic translation factor GTPase family. EF-G/EF-2 subfamily. In terms of assembly, component of the U5 snRNP and the U4/U6-U5 tri-snRNP complex, a building block of the spliceosome. The U4/U6-U5 tri-snRNP complex is composed of the U4, U6 and U5 snRNAs and at least PRPF3, PRPF4, PRPF6, PRPF8, PRPF31, SNRNP200, TXNL4A, SNRNP40, DDX23, CD2BP2, PPIH, SNU13, EFTUD2, SART1 and USP39. Component of the pre-catalytic, catalytic and post-catalytic spliceosome complexes. Component of the minor spliceosome, which splices U12-type introns. Within this complex, interacts with CRIPT. Interacts with ERBB4 and PRPF8. Interacts with PIH1D1. Interacts with RPAP3 and URI1 in a ZNHIT2-dependent manner. Interacts with NRDE2. Interacts with FAM50A. Interacts with UBL5.

It localises to the nucleus. Functionally, required for pre-mRNA splicing as component of the spliceosome, including pre-catalytic, catalytic and post-catalytic spliceosomal complexes. Component of the U5 snRNP and the U4/U6-U5 tri-snRNP complex, a building block of the spliceosome. As a component of the minor spliceosome, involved in the splicing of U12-type introns in pre-mRNAs. This Homo sapiens (Human) protein is 116 kDa U5 small nuclear ribonucleoprotein component (EFTUD2).